The sequence spans 282 residues: Putative hydrolase Bmul_3283/BMULJ_05242 (282 aa).

3 residues coordinate Mg(2+): Glu-124, Glu-126, and Asp-155.

It belongs to the FAH family. Mg(2+) serves as cofactor.

The sequence is that of Putative hydrolase Bmul_3283/BMULJ_05242 from Burkholderia multivorans (strain ATCC 17616 / 249).